The sequence spans 630 residues: Plastin-1 (630 aa).

At methionine 1 the chain carries N-acetylmethionine. EF-hand domains are found at residues 11–46 (EELEELQEAFNKIDIDNSGYVSDYELQDLFKEASLP) and 51–86 (KVREIVEKILAVADNNKDSRISFEEFVSLMQELKSK). Residues aspartate 24, aspartate 26, serine 28, tyrosine 30, glutamate 35, aspartate 64, asparagine 66, aspartate 68, arginine 70, and glutamate 75 each coordinate Ca(2+). Actin-binding regions lie at residues 108 to 381 (TSSI…GLHK) and 382 to 626 (PDNN…GKGL). Calponin-homology (CH) domains are found at residues 122–238 (EEEK…KVGL), 266–377 (LSPE…NTYP), 396–505 (SKEE…RRYT), and 517–626 (KVND…GKGL).

As to quaternary structure, monomer. Phosphorylated.

It is found in the cytoplasm. It localises to the cell projection. The protein localises to the stereocilium. Actin-bundling protein. In the inner ear, it is required for stereocilia formation. Mediates liquid packing of actin filaments that is necessary for stereocilia to grow to their proper dimensions. In Bos taurus (Bovine), this protein is Plastin-1 (PLS1).